We begin with the raw amino-acid sequence, 638 residues long: Threonine--tRNA ligase (638 aa).

The TGS domain maps to 1–61 (MPIITLPDGS…NKDSKVVIIT (61 aa)). The tract at residues 242-533 (DHRKLGKKHS…LIEQYEAKFP (292 aa)) is catalytic. The Zn(2+) site is built by Cys-333, His-384, and His-510.

Belongs to the class-II aminoacyl-tRNA synthetase family. In terms of assembly, homodimer. Zn(2+) is required as a cofactor.

It is found in the cytoplasm. The enzyme catalyses tRNA(Thr) + L-threonine + ATP = L-threonyl-tRNA(Thr) + AMP + diphosphate + H(+). In terms of biological role, catalyzes the attachment of threonine to tRNA(Thr) in a two-step reaction: L-threonine is first activated by ATP to form Thr-AMP and then transferred to the acceptor end of tRNA(Thr). Also edits incorrectly charged L-seryl-tRNA(Thr). This is Threonine--tRNA ligase from Prochlorococcus marinus (strain AS9601).